Reading from the N-terminus, the 360-residue chain is UDP-N-acetylglucosamine--N-acetylmuramyl-(pentapeptide) pyrophosphoryl-undecaprenol N-acetylglucosamine transferase (360 aa).

Residues 12-14 (TAG), serine 198, and glutamine 289 contribute to the UDP-N-acetyl-alpha-D-glucosamine site.

This sequence belongs to the glycosyltransferase 28 family. MurG subfamily.

The protein localises to the cell membrane. It carries out the reaction Mur2Ac(oyl-L-Ala-gamma-D-Glu-L-Lys-D-Ala-D-Ala)-di-trans,octa-cis-undecaprenyl diphosphate + UDP-N-acetyl-alpha-D-glucosamine = beta-D-GlcNAc-(1-&gt;4)-Mur2Ac(oyl-L-Ala-gamma-D-Glu-L-Lys-D-Ala-D-Ala)-di-trans,octa-cis-undecaprenyl diphosphate + UDP + H(+). It functions in the pathway cell wall biogenesis; peptidoglycan biosynthesis. In terms of biological role, cell wall formation. Catalyzes the transfer of a GlcNAc subunit on undecaprenyl-pyrophosphoryl-MurNAc-pentapeptide (lipid intermediate I) to form undecaprenyl-pyrophosphoryl-MurNAc-(pentapeptide)GlcNAc (lipid intermediate II). This is UDP-N-acetylglucosamine--N-acetylmuramyl-(pentapeptide) pyrophosphoryl-undecaprenol N-acetylglucosamine transferase from Streptococcus equi subsp. zooepidemicus (strain H70).